Consider the following 461-residue polypeptide: CBL-interacting protein kinase 5 (461 aa).

Positions 12-266 (YELGRMLGQG…VEKLVEHPWF (255 aa)) constitute a Protein kinase domain. ATP-binding positions include 18-26 (LGQGTFAKV) and K41. D134 (proton acceptor) is an active-site residue. The interval 152 to 181 (DFGLSAFKECQKQDGLLHTTCGTPAYVAPE) is activation loop. The NAF domain maps to 300–334 (EGKAKEPASSLKPVSLNAFDIISLSKGFDLSGLFE). The tract at residues 340 to 369 (KADSRFMTQKPASAIVSKLEQIAETESFKV) is PPI. Residues 440-461 (HPSLAQSSTLTQSSKSISRHAI) are disordered. Low complexity predominate over residues 442–455 (SLAQSSTLTQSSKS).

The protein belongs to the protein kinase superfamily. CAMK Ser/Thr protein kinase family. SNF1 subfamily. Mn(2+) serves as cofactor.

The enzyme catalyses L-seryl-[protein] + ATP = O-phospho-L-seryl-[protein] + ADP + H(+). The catalysed reaction is L-threonyl-[protein] + ATP = O-phospho-L-threonyl-[protein] + ADP + H(+). In terms of biological role, CIPK serine-threonine protein kinases interact with CBL proteins. Binding of a CBL protein to the regulatory NAF domain of CIPK protein lead to the activation of the kinase in a calcium-dependent manner. This is CBL-interacting protein kinase 5 (CIPK5) from Oryza sativa subsp. japonica (Rice).